Reading from the N-terminus, the 429-residue chain is Histidine--tRNA ligase (429 aa).

This sequence belongs to the class-II aminoacyl-tRNA synthetase family. In terms of assembly, homodimer.

It is found in the cytoplasm. It carries out the reaction tRNA(His) + L-histidine + ATP = L-histidyl-tRNA(His) + AMP + diphosphate + H(+). The polypeptide is Histidine--tRNA ligase (Prochlorococcus marinus subsp. pastoris (strain CCMP1986 / NIES-2087 / MED4)).